We begin with the raw amino-acid sequence, 202 residues long: MNFLRKIVRNCKDEDDQKPPLVSAPPDDDDLWLPPPEYVPLTEITGKRNMRNFCINGEVKVCSPNGYSFRILRHILKSFDEIYSGNHRMIGLVKVVIGLALSGAPVPEGMNWVYKLRRTLIFQWAESRGPLDGEELEYSQEITWDDDSEFIGLQIRVSARQCHIQGRIWCINMNSRACQLWSDMSLKTQQSEEDKNSSLLLE.

The PPXY motif signature appears at 45-48 (TGKR). The segment at 125–161 (AESRGPLDGEELEYSQEITWDDDSEFIGLQIRVSARQ) is essential for glycoprotein binding.

Belongs to the lyssavirus matrix protein family. In terms of assembly, homomultimer. Interacts with nucleoprotein and with the cytoplasmic domain of glycoprotein.

The protein resides in the virion membrane. It is found in the host endomembrane system. Its function is as follows. Plays a major role in assembly and budding of virion. Completely covers the ribonucleoprotein coil and keep it in condensed bullet-shaped form. Inhibits viral transcription and stimulates replication. Plays a major role in early induction of TRAIL-mediated apoptosis in infected neurons. The chain is Matrix protein (M) from Australian bat lyssavirus (isolate Human/AUS/1998) (ABLV).